The following is a 184-amino-acid chain: dCTP deaminase (184 aa).

DCTP is bound by residues Lys107–Arg112, Thr131–Glu133, Gln152, Tyr166, and Gln176. The active-site Proton donor/acceptor is the Glu133.

Belongs to the dCTP deaminase family. In terms of assembly, homotrimer.

It catalyses the reaction dCTP + H2O + H(+) = dUTP + NH4(+). It functions in the pathway pyrimidine metabolism; dUMP biosynthesis; dUMP from dCTP (dUTP route): step 1/2. In terms of biological role, catalyzes the deamination of dCTP to dUTP. This Erythrobacter litoralis (strain HTCC2594) protein is dCTP deaminase.